The sequence spans 276 residues: uncharacterized protein (276 aa).

Residues 20–137 (PVLIFIPGAN…PPINTFLPDS (118 aa)) enclose the AB hydrolase-1 domain. Residues 57 to 76 (GESELTEPLPDSASNPDSDY) form a disordered region.

This sequence belongs to the AB hydrolase superfamily.

This is an uncharacterized protein from Staphylococcus aureus (strain COL).